A 443-amino-acid polypeptide reads, in one-letter code: MARAAWGLLWLLLGSAGAQYEKYSFRGFPPEDLMPLATAYGHALEQYEGESWRESARYLEAALRLHRLLRDSEAFCHANCSGPATSQPRPAPGPDGDNEGDGEDWARELRLFGHVLERAACLRRCKRTLPAFQVPYPSRQLLRDFQNRLPYQYLHYAHFKANRLEKAVAAAYTFLQRNPKHELTAKYLNYYRGMLDIGDESLTDLEAQPYEAVFLQAVKLYNSGDFRSSTEHMERALADYMTVFARCLAGCEGAHEQVDFKDFYPAIADLFAESLQCKVDCEANLTPNVGGFFVDKFVATMYHYLQFAYYKLNDVHQAARSAASYMLFDPKDSVMQQNLVYYRFHRARWGLEEEDFQPREEAVLYHNQTSELRELLDFTHMYLQSDDEMELEETESLPEPEKPLSDAEFEGEGDYEEGLYADWWQEPDAKGDEDEAEPEPELA.

The first 18 residues, 1-18 (MARAAWGLLWLLLGSAGA), serve as a signal peptide directing secretion. The tract at residues 81–102 (SGPATSQPRPAPGPDGDNEGDG) is disordered. N-linked (GlcNAc...) asparagine glycosylation is present at Asn367. Acidic residues-rich tracts occupy residues 387–398 (DEMELEETESLP), 407–419 (AEFE…EEGL), and 431–443 (GDED…PELA). The tract at residues 387-443 (DEMELEETESLPEPEKPLSDAEFEGEGDYEEGLYADWWQEPDAKGDEDEAEPEPELA) is disordered.

Belongs to the leprecan family. In terms of assembly, interacts with PLOD1, P3H3 and PPIB. Identified in a complex with PLOD1 and P3H3. In terms of tissue distribution, found in testis, brain, heart and at a much lower level in liver.

It is found in the endoplasmic reticulum. Functionally, part of a complex composed of PLOD1, P3H3 and P3H4 that catalyzes hydroxylation of lysine residues in collagen alpha chains and is required for normal assembly and cross-linking of collagen fibrils. Required for normal bone density and normal skin stability via its role in hydroxylation of lysine residues in collagen alpha chains and in collagen fibril assembly. This Rattus norvegicus (Rat) protein is Endoplasmic reticulum protein SC65.